Here is a 717-residue protein sequence, read N- to C-terminus: MNVPVGHLRNVQVLGIDAGGTMTDTFFVDQDGDFVVGKAQSTPQNEALGLIASSEDGLANWGMSLHEALAQLQTGVYSGTAMLNRVVQRKGLKCGLIVNRGMEDFHRMGRAVQSHLGYAYEDRIHLNTHRYDPPLVPRHLTRGVVERTDMIGTQVIPLREDTARDAARDLIAADAEGIVISLLHSYKNPENERRVRDIVLEEVEKSGKKIPVFASADYYPVRKETHRTNTTILEGYAAEPSRQTLSKISNAFKERGTKFDFRVMATHGGTISWKAKELARTIVSGPIGGVIGAKYLGEVLGYKNIACSDIGGTSFDVALITQGEMTIKNDPDMARLVLSLPLVAMDSVGAGAGSFIRLDPYTRAIKLGPDSAGYRVGVCWKESGIETVTISDCHMVLGYLNPDNFLGGAVKLDRQRSVDAIKAQIADPLGLSVEDAAAGVIELLDSDLRDYLRSMISGKGYSPASFVCFSYGGAGPVHTYGYTEGLGFEDVIVPAWAAGFSAFGCAAADFEYRYDKSLDINMPTETPDTDKEKAAATLQAAWEELTKNVLEEFKLNGYSADQVTLQPGYRMQYRGQLNDLEIESPLAQAHTAADWDQLTDAFNATYGRVYAASARSPELGYSVTGAIMRGMVPIPKPKIPKEPEEGETPPESAKIGTRKFYRKKRWVDAQLYHMESLRPGNRVMGPAVIESDATTFVVPDGFETWLDGHRLFHLREV.

Heterohexamer of two alpha, two beta and two gamma subunits. Fe cation is required as a cofactor. Mg(2+) serves as cofactor. The cofactor is Zn(2+). In terms of processing, the N-terminus is blocked.

It carries out the reaction acetone + hydrogencarbonate + 2 ATP + 3 H2O = acetoacetate + 2 AMP + 4 phosphate + 4 H(+). Functionally, catalyzes the carboxylation of acetone to form acetoacetate. Has a reduced activity on butanone, and no activity on 2-pentatone, 3-pentatone, 2-hexanone, chloroacetone, pyruvate, phosphoenolpyruvate, acetaldehyde, propionaldehyde and propylene oxide. This chain is Acetone carboxylase beta subunit, found in Xanthobacter autotrophicus (strain ATCC BAA-1158 / Py2).